We begin with the raw amino-acid sequence, 147 residues long: MVHFTAEEKAAITSLWGKMNVEEAGGEALGRLLVVYPWTQRFFDNFGNLSSPSAILGNPKVKAHGKKVLTSFGDAIKNMDNLKTTFAKLSELHCDKLHVDPENFRLLGNVLVIILATHFGKEFTPEVQAAWQKLVSAVAIALGHKYH.

The 145-residue stretch at 3-147 folds into the Globin domain; that stretch reads HFTAEEKAAI…VAIALGHKYH (145 aa). Residues Ser14 and Ser51 each carry the phosphoserine modification. The heme b site is built by His64 and His93.

This sequence belongs to the globin family. In terms of assembly, heterotetramer of two alpha chains and two epsilon chains in early embryonic hemoglobin Gower-2; two zeta chains and two epsilon chains in early embryonic hemoglobin Gower-1. As to expression, red blood cells.

The epsilon chain is a beta-type chain of early mammalian embryonic hemoglobin. This is Hemoglobin subunit epsilon (HBE1) from Callithrix jacchus (White-tufted-ear marmoset).